The following is a 661-amino-acid chain: DNA ligase (661 aa).

NAD(+)-binding positions include 31–35, 79–80, and Glu-112; these read DKEYD and SL. Residue Lys-114 is the N6-AMP-lysine intermediate of the active site. Positions 135, 169, 281, and 305 each coordinate NAD(+). Zn(2+)-binding residues include Cys-398, Cys-401, Cys-414, and Cys-420. The region spanning 578-661 is the BRCT domain; the sequence is QQENIFLGKT…ISEAEFEAML (84 aa).

Belongs to the NAD-dependent DNA ligase family. LigA subfamily. It depends on Mg(2+) as a cofactor. The cofactor is Mn(2+).

The catalysed reaction is NAD(+) + (deoxyribonucleotide)n-3'-hydroxyl + 5'-phospho-(deoxyribonucleotide)m = (deoxyribonucleotide)n+m + AMP + beta-nicotinamide D-nucleotide.. Functionally, DNA ligase that catalyzes the formation of phosphodiester linkages between 5'-phosphoryl and 3'-hydroxyl groups in double-stranded DNA using NAD as a coenzyme and as the energy source for the reaction. It is essential for DNA replication and repair of damaged DNA. This Alkaliphilus oremlandii (strain OhILAs) (Clostridium oremlandii (strain OhILAs)) protein is DNA ligase.